The primary structure comprises 127 residues: Small ribosomal subunit protein uS12 (127 aa).

At Asp-89 the chain carries 3-methylthioaspartic acid. A disordered region spans residues 101 to 127 (ALDTSGVAGRTQRRSKYGAKRPKEAKK). Residues 111–127 (TQRRSKYGAKRPKEAKK) show a composition bias toward basic residues.

The protein belongs to the universal ribosomal protein uS12 family. In terms of assembly, part of the 30S ribosomal subunit. Contacts proteins S8 and S17. May interact with IF1 in the 30S initiation complex.

In terms of biological role, with S4 and S5 plays an important role in translational accuracy. Interacts with and stabilizes bases of the 16S rRNA that are involved in tRNA selection in the A site and with the mRNA backbone. Located at the interface of the 30S and 50S subunits, it traverses the body of the 30S subunit contacting proteins on the other side and probably holding the rRNA structure together. The combined cluster of proteins S8, S12 and S17 appears to hold together the shoulder and platform of the 30S subunit. The protein is Small ribosomal subunit protein uS12 of Flavobacterium johnsoniae (strain ATCC 17061 / DSM 2064 / JCM 8514 / BCRC 14874 / CCUG 350202 / NBRC 14942 / NCIMB 11054 / UW101) (Cytophaga johnsonae).